Consider the following 127-residue polypeptide: MRHYEIVLLVHPDQSDQVVGMVERYISQIKEADGQIHRLEDWGRRQLAYPINKIHKAHYILMNVECGQSTLDELEELFRYNDAIIRNLIIRREHAITEESLLAKSAEEKRARKAQREEAQQVAQEAE.

Belongs to the bacterial ribosomal protein bS6 family.

Functionally, binds together with bS18 to 16S ribosomal RNA. This is Small ribosomal subunit protein bS6 from Acinetobacter baumannii (strain AB0057).